The chain runs to 1294 residues: Unconventional myosin-VI (1294 aa).

In terms of domain architecture, Myosin N-terminal SH3-like spans 2–53; it reads EDGKPVWAPHPTDGFQMGNIVDIGPDSLTIEPLNQKGKTFLALINQVFPAEE. Positions 57–771 constitute a Myosin motor domain; the sequence is KDVEDNCSLM…KFAEFDQIMK (715 aa). Residue 151-158 participates in ATP binding; the sequence is GESGAGKT. Ser-267 carries the phosphoserine modification. The tract at residues 273 to 317 is responsible for slow ATPase activity; sequence YLNRGCTRYFANKETDKQILQNRKSPEYLKAGSMKDPLLDDHGDF. Thr-405 bears the Phosphothreonine mark. Ser-604 is subject to Phosphoserine. The segment at 665–672 is actin-binding; sequence FIRCIKPN. The tract at residues 782–810 is required for binding calmodulin; it reads KRVNHWLTCSRWKKVQWCSLSVIKLKNKI. Residues 814-834 enclose the IQ domain; it reads AEACIKMQKTIRMWLCKRRHK. The three-helix bundle stretch occupies residues 835–916; sequence PRIDGLVKVG…EELLSALQKK (82 aa). An SAH region spans residues 917 to 984; it reads KQQEEEAERL…EDDEKRIQAE (68 aa). Positions 934-955 are disordered; sequence EKERKRREEDEKRRRKEEEERR. Ser-1025 carries the phosphoserine modification. Residues 1060–1285 form an interaction with TAX1BP1 and CALCOCO2/NDP52 region; sequence KEMSEFLSRG…ESRQARPTYA (226 aa). An interaction with OPTN region spans residues 1116 to 1118; it reads RRL. Phosphoserine is present on Ser-1155. Residues 1157–1285 are interaction with TOM1; it reads QQNPAAQIPA…ESRQARPTYA (129 aa).

Belongs to the TRAFAC class myosin-kinesin ATPase superfamily. Myosin family. As to quaternary structure, homodimer; dimerization seems to implicate the unfolding of the three-helix bundle region creating an additional calmodulin binding site, and cargo binding. Able to function as a monomer under specific conditions in vitro. Forms a complex with CFTR and DAB2 in the apical membrane of epithelial cells. Component of the DISP/DOCK7-induced septin displacement complex, at least composed of DOCK7, LRCH3 and MYO6. Binding to calmodulin through a unique insert, not found in other myosins, located in the neck region between the motor domain and the IQ domain appears to contribute to the directionality reversal. This interaction occurs only if the C-terminal lobe of calmodulin is occupied by calcium. Interaction with F-actin/ACTN1 occurs only at the apical brush border domain of the proximal tubule cells. Interacts with DAB2. In vitro, the C-terminal globular tail binds a C-terminal region of DAB2. Interacts with CFTR. Interacts with CABP5. Interacts with TOM1. Interacts with OPTN. Interacts with TAX1BP1 and CALCOCO2/NDP52. Interacts with TOM1L2. Interacts with CLIC5; may work together in a complex which also includes RDX and MYO6 to stabilize linkages between the plasma membrane and subjacent actin cytoskeleton at the base of stereocilia. Phosphorylation in the motor domain, induced by EGF, results in translocation of MYO6 from the cell surface to membrane ruffles and affects F-actin dynamics. Phosphorylated in vitro by p21-activated kinase (PAK). As to expression, expressed in most tissues examined including heart, brain, placenta, pancreas, spleen, thymus, prostate, testis, ovary, small intestine and colon. Highest levels in brain, pancreas, testis and small intestine. Also expressed in fetal brain and cochlea. Isoform 1 and isoform 2, containing the small insert, and isoform 4, containing neither insert, are expressed in unpolarized epithelial cells.

Its subcellular location is the golgi apparatus. It is found in the trans-Golgi network membrane. The protein localises to the nucleus. It localises to the cytoplasm. The protein resides in the perinuclear region. Its subcellular location is the membrane. It is found in the clathrin-coated pit. The protein localises to the cytoplasmic vesicle. It localises to the clathrin-coated vesicle. The protein resides in the cell projection. Its subcellular location is the filopodium. It is found in the ruffle membrane. The protein localises to the microvillus. It localises to the cytosol. The protein resides in the autophagosome. Its subcellular location is the endosome. It is found in the clathrin-coated vesicle membrane. Its function is as follows. Myosins are actin-based motor molecules with ATPase activity. Unconventional myosins serve in intracellular movements. Myosin 6 is a reverse-direction motor protein that moves towards the minus-end of actin filaments. Has slow rate of actin-activated ADP release due to weak ATP binding. Functions in a variety of intracellular processes such as vesicular membrane trafficking and cell migration. Required for the structural integrity of the Golgi apparatus via the p53-dependent pro-survival pathway. Appears to be involved in a very early step of clathrin-mediated endocytosis in polarized epithelial cells. Together with TOM1, mediates delivery of endocytic cargo to autophagosomes thereby promoting autophagosome maturation and driving fusion with lysosomes. Links TOM1 with autophagy receptors, such as TAX1BP1; CALCOCO2/NDP52 and OPTN. May act as a regulator of F-actin dynamics. As part of the DISP complex, may regulate the association of septins with actin and thereby regulate the actin cytoskeleton. May play a role in transporting DAB2 from the plasma membrane to specific cellular targets. May play a role in the extension and network organization of neurites. Required for structural integrity of inner ear hair cells. Required for the correct localization of CLIC5 and RDX at the stereocilium base. Modulates RNA polymerase II-dependent transcription. The sequence is that of Unconventional myosin-VI from Homo sapiens (Human).